We begin with the raw amino-acid sequence, 288 residues long: MKSFCVKAPAKINLFLHVVDKKETGYHLIEGLFVFANLSNFLEIKVGEKDSRYDNSTVEFINSESKINNQYNTVMKAVNLLLRHAPVRTKVTVKVVKNIPIAAGLGSGSSDAGAVVRTLGKLWEIDRTILNEIALNVGADVPASVDSKPVFVRGIGEELCHIKKFSLPTNVVLVKPKKRFLSTPEVFSKHEGKFSEPIKWSDDAEKDLLKFLKETRNDLQEIAISFVPEIKDVISTLKSQEGSILSRMSGSGVSCFGIFDSEENAKAAAVNIGKKQPEWWVCNTQLIV.

Lys11 is an active-site residue. Residue 100–110 (PIAAGLGSGSS) participates in ATP binding. Asp140 is a catalytic residue.

Belongs to the GHMP kinase family. IspE subfamily.

The catalysed reaction is 4-CDP-2-C-methyl-D-erythritol + ATP = 4-CDP-2-C-methyl-D-erythritol 2-phosphate + ADP + H(+). It participates in isoprenoid biosynthesis; isopentenyl diphosphate biosynthesis via DXP pathway; isopentenyl diphosphate from 1-deoxy-D-xylulose 5-phosphate: step 3/6. Catalyzes the phosphorylation of the position 2 hydroxy group of 4-diphosphocytidyl-2C-methyl-D-erythritol. In Wolbachia pipientis wMel, this protein is 4-diphosphocytidyl-2-C-methyl-D-erythritol kinase.